A 461-amino-acid chain; its full sequence is tRNA modification GTPase MnmE (461 aa).

Positions 23, 88, and 127 each coordinate (6S)-5-formyl-5,6,7,8-tetrahydrofolate. A TrmE-type G domain is found at 223 to 383; the sequence is GLNTVIVGKP…LKECIKNLFF (161 aa). Residue Asn-233 participates in K(+) binding. Residues 233-238, 252-258, and 277-280 each bind GTP; these read NVGKSS, TEIPGTT, and DTAG. Ser-237 contacts Mg(2+). K(+) is bound by residues Thr-252, Ile-254, and Thr-257. Thr-258 lines the Mg(2+) pocket. Position 461 (Lys-461) interacts with (6S)-5-formyl-5,6,7,8-tetrahydrofolate.

It belongs to the TRAFAC class TrmE-Era-EngA-EngB-Septin-like GTPase superfamily. TrmE GTPase family. In terms of assembly, homodimer. Heterotetramer of two MnmE and two MnmG subunits. Requires K(+) as cofactor.

Its subcellular location is the cytoplasm. Exhibits a very high intrinsic GTPase hydrolysis rate. Involved in the addition of a carboxymethylaminomethyl (cmnm) group at the wobble position (U34) of certain tRNAs, forming tRNA-cmnm(5)s(2)U34. This chain is tRNA modification GTPase MnmE, found in Clostridium botulinum (strain Langeland / NCTC 10281 / Type F).